A 420-amino-acid polypeptide reads, in one-letter code: Gamma-glutamyl phosphate reductase (420 aa).

The protein belongs to the gamma-glutamyl phosphate reductase family.

It localises to the cytoplasm. The enzyme catalyses L-glutamate 5-semialdehyde + phosphate + NADP(+) = L-glutamyl 5-phosphate + NADPH + H(+). It participates in amino-acid biosynthesis; L-proline biosynthesis; L-glutamate 5-semialdehyde from L-glutamate: step 2/2. Functionally, catalyzes the NADPH-dependent reduction of L-glutamate 5-phosphate into L-glutamate 5-semialdehyde and phosphate. The product spontaneously undergoes cyclization to form 1-pyrroline-5-carboxylate. This is Gamma-glutamyl phosphate reductase from Streptococcus pneumoniae (strain 70585).